The sequence spans 308 residues: uncharacterized protein (308 aa).

Residues leucine 50, aspartate 90, asparagine 117, tyrosine 182, lysine 186, isoleucine 222, and threonine 224 each contribute to the NADP(+) site. Tyrosine 182 functions as the Proton acceptor in the catalytic mechanism. The active-site Lowers pKa of active site Tyr is the lysine 186.

This sequence belongs to the short-chain dehydrogenases/reductases (SDR) family.

This is an uncharacterized protein from Saccharomyces cerevisiae (strain ATCC 204508 / S288c) (Baker's yeast).